The sequence spans 50 residues: Insulin (50 aa).

3 disulfide bridges follow: Cys-7–Cys-36, Cys-19–Cys-49, and Cys-35–Cys-40.

Belongs to the insulin family. In terms of assembly, heterodimer of a B chain and an A chain linked by two disulfide bonds.

It localises to the secreted. Its function is as follows. Insulin decreases blood glucose concentration. It increases cell permeability to monosaccharides, amino acids and fatty acids. It accelerates glycolysis, the pentose phosphate cycle, and glycogen synthesis in liver. The sequence is that of Insulin (ins) from Oncorhynchus gorbuscha (Pink salmon).